A 127-amino-acid polypeptide reads, in one-letter code: MNLIQQLEKEQFDKLSANKTIPEFGPGDTVIVNVKVVEGDRTRVQAYEGVCIGRSGGGINESFTVRKISYGEGVERVFPILSPMIDSIKVVRRGKVRRAKLYYLRQLRGKSARIVEKQDRQQAAVNE.

The protein belongs to the bacterial ribosomal protein bL19 family.

This protein is located at the 30S-50S ribosomal subunit interface and may play a role in the structure and function of the aminoacyl-tRNA binding site. The chain is Large ribosomal subunit protein bL19 from Bradyrhizobium sp. (strain BTAi1 / ATCC BAA-1182).